The sequence spans 243 residues: Bidirectional sugar transporter SWEET2a (243 aa).

Residues 1 to 15 (MMNALGLSVAATSTG) form the signal peptide. At 16–24 (SPFHDVCCY) the chain is on the extracellular side. The chain crosses the membrane as a helical span at residues 25–45 (GAGIAGNIFALVLFISPLPTF). In terms of domain architecture, MtN3/slv 1 spans 27–112 (GIAGNIFALV…ATFIAFADAK (86 aa)). Residues 46 to 56 (KRIVRNGSTEQ) lie on the Cytoplasmic side of the membrane. Residues 57–79 (FSAMPYIYSLLNCLICLWYGLPF) form a helical membrane-spanning segment. Residues 80 to 90 (VSYGVVLVATV) are Extracellular-facing. A helical transmembrane segment spans residues 91–111 (NSIGALFQLAYTATFIAFADA). The Cytoplasmic segment spans residues 112-118 (KNRVKVS). The chain crosses the membrane as a helical span at residues 119–139 (SLLVMVFGVFALIVYVSLALF). The Extracellular portion of the chain corresponds to 140-146 (DHQTRQL). The helical transmembrane segment at 147-167 (FVGYLSVASLIFMFASPLSII) threads the bilayer. A MtN3/slv 2 domain is found at 147-229 (FVGYLSVASL…QLVLYGYFRK (83 aa)). The Cytoplasmic portion of the chain corresponds to 168–180 (NLVIRTKSVEYMP). The helical transmembrane segment at 181–201 (FYLSLSMFLMSVSFFAYGVLL) threads the bilayer. Over 202 to 203 (HD) the chain is Extracellular. Residues 204–224 (FFIYIPNGIGTVLGVIQLVLY) traverse the membrane as a helical segment. Residues 225-243 (GYFRKGSREDSLPLLVTHT) lie on the Cytoplasmic side of the membrane.

The protein belongs to the SWEET sugar transporter family. Forms homooligomers and/or heterooligomers.

The protein resides in the cell membrane. Functionally, mediates both low-affinity uptake and efflux of sugar across the plasma membrane. This is Bidirectional sugar transporter SWEET2a (SWEET2A) from Oryza sativa subsp. indica (Rice).